We begin with the raw amino-acid sequence, 304 residues long: KIN17-like protein (304 aa).

The C2H2-type zinc finger occupies 26–50; it reads WYCSACQKQMRDENGFKCHTQSEGH. Disordered stretches follow at residues 204–228 and 261–291; these read IDLS…SAQN and LNKS…DIIA.

This sequence belongs to the KIN17 family.

Its subcellular location is the nucleus. It localises to the nucleolus. This Schizosaccharomyces pombe (strain 972 / ATCC 24843) (Fission yeast) protein is KIN17-like protein.